Here is a 457-residue protein sequence, read N- to C-terminus: tRNA-2-methylthio-N(6)-dimethylallyladenosine synthase (457 aa).

Residues 4–119 (RNFHIITFGC…APDAIERLYA (116 aa)) enclose the MTTase N-terminal domain. [4Fe-4S] cluster contacts are provided by Cys-13, Cys-48, Cys-82, Cys-164, Cys-168, and Cys-171. The region spanning 150-385 (NTLALMAYVN…QATQLEHSTS (236 aa)) is the Radical SAM core domain. The region spanning 388–456 (KSRVGVETTV…KHSLVAEPLI (69 aa)) is the TRAM domain.

The protein belongs to the methylthiotransferase family. MiaB subfamily. In terms of assembly, monomer. [4Fe-4S] cluster is required as a cofactor.

Its subcellular location is the cytoplasm. The catalysed reaction is N(6)-dimethylallyladenosine(37) in tRNA + (sulfur carrier)-SH + AH2 + 2 S-adenosyl-L-methionine = 2-methylsulfanyl-N(6)-dimethylallyladenosine(37) in tRNA + (sulfur carrier)-H + 5'-deoxyadenosine + L-methionine + A + S-adenosyl-L-homocysteine + 2 H(+). Catalyzes the methylthiolation of N6-(dimethylallyl)adenosine (i(6)A), leading to the formation of 2-methylthio-N6-(dimethylallyl)adenosine (ms(2)i(6)A) at position 37 in tRNAs that read codons beginning with uridine. The sequence is that of tRNA-2-methylthio-N(6)-dimethylallyladenosine synthase from Lawsonia intracellularis (strain PHE/MN1-00).